Here is a 108-residue protein sequence, read N- to C-terminus: Parvalbumin alpha (108 aa).

Alanine 1 is modified (N-acetylalanine). EF-hand domains lie at 37–72 (MSANDVKKVFKAIDADASGFIEEEELKFVLKSFAAD) and 76–108 (LTDAETKAFLKAADKDGDGKIGIDEFETLVHEA). Ca(2+)-binding residues include aspartate 50, aspartate 52, serine 54, phenylalanine 56, glutamate 58, glutamate 61, aspartate 89, aspartate 91, aspartate 93, lysine 95, and glutamate 100.

This sequence belongs to the parvalbumin family.

Functionally, in muscle, parvalbumin is thought to be involved in relaxation after contraction. It binds two calcium ions. This is Parvalbumin alpha from Esox lucius (Northern pike).